A 355-amino-acid polypeptide reads, in one-letter code: Heat-inducible transcription repressor HrcA (355 aa).

Belongs to the HrcA family.

Negative regulator of class I heat shock genes (grpE-dnaK-dnaJ and groELS operons). Prevents heat-shock induction of these operons. This Nitratidesulfovibrio vulgaris (strain DP4) (Desulfovibrio vulgaris) protein is Heat-inducible transcription repressor HrcA.